The following is a 268-amino-acid chain: Glucosamine-6-phosphate deaminase (268 aa).

Asp-72 serves as the catalytic Proton acceptor; for enolization step. The active-site For ring-opening step is Asp-141. Catalysis depends on His-143, which acts as the Proton acceptor; for ring-opening step. The active-site For ring-opening step is Glu-148.

Belongs to the glucosamine/galactosamine-6-phosphate isomerase family. NagB subfamily. Homohexamer.

It carries out the reaction alpha-D-glucosamine 6-phosphate + H2O = beta-D-fructose 6-phosphate + NH4(+). The protein operates within amino-sugar metabolism; N-acetylneuraminate degradation; D-fructose 6-phosphate from N-acetylneuraminate: step 5/5. Allosterically activated by N-acetylglucosamine 6-phosphate (GlcNAc6P). In terms of biological role, catalyzes the reversible isomerization-deamination of glucosamine 6-phosphate (GlcN6P) to form fructose 6-phosphate (Fru6P) and ammonium ion. In Proteus mirabilis (strain HI4320), this protein is Glucosamine-6-phosphate deaminase.